Here is a 298-residue protein sequence, read N- to C-terminus: N-acetylmuramic acid 6-phosphate etherase (298 aa).

Residues isoleucine 55–lysine 218 form the SIS domain. Catalysis depends on glutamate 83, which acts as the Proton donor. Residue glutamate 114 is part of the active site.

The protein belongs to the GCKR-like family. MurNAc-6-P etherase subfamily. As to quaternary structure, homodimer.

The catalysed reaction is N-acetyl-D-muramate 6-phosphate + H2O = N-acetyl-D-glucosamine 6-phosphate + (R)-lactate. It functions in the pathway amino-sugar metabolism; 1,6-anhydro-N-acetylmuramate degradation. It participates in amino-sugar metabolism; N-acetylmuramate degradation. The protein operates within cell wall biogenesis; peptidoglycan recycling. Specifically catalyzes the cleavage of the D-lactyl ether substituent of MurNAc 6-phosphate, producing GlcNAc 6-phosphate and D-lactate. Together with AnmK, is also required for the utilization of anhydro-N-acetylmuramic acid (anhMurNAc) either imported from the medium or derived from its own cell wall murein, and thus plays a role in cell wall recycling. This is N-acetylmuramic acid 6-phosphate etherase from Escherichia coli O127:H6 (strain E2348/69 / EPEC).